The following is a 314-amino-acid chain: Deoxymugineic acid synthase 1 (314 aa).

The tract at residues 1–21 (MGAGDRTVAGMPRIGMGTAVQ) is disordered. Residue Asp-44 participates in NADP(+) binding. Tyr-49 acts as the Proton donor in catalysis. His-112 contacts substrate. NADP(+) contacts are provided by residues 158-159 (AN), Gln-180, 258-266 (FDEARMREN), and 273-281 (ELTEEERRR).

The protein belongs to the aldo/keto reductase family.

The enzyme catalyses 2'-deoxymugineate + NAD(+) = 3''-deamino-3''-oxonicotianamine + NADH + H(+). The catalysed reaction is 2'-deoxymugineate + NADP(+) = 3''-deamino-3''-oxonicotianamine + NADPH + H(+). Its pathway is siderophore biosynthesis. In terms of biological role, catalyzes the reduction of a 3''-keto intermediate during the biosynthesis of 2'-deoxymugineic acid (DMA) from L-Met. Involved in the formation of phytosiderophores (MAs) belonging to the mugineic acid family and required to acquire iron. This Hordeum vulgare (Barley) protein is Deoxymugineic acid synthase 1.